A 220-amino-acid polypeptide reads, in one-letter code: MASGGDPKWQKDAADQNFDYMFKLLIIGNSSVGKTSFLFRYADDSFTSAFVSTVGIDFKVKTVFRHDKRVKLQIWDTAGQERYRTITTAYYRGAMGFILMYDVTNEDSFNSVQDWVTQIKTYSWDNAQVILVGNKCDMEDQRVISFERGRQLADQLGVEFFETSAKENVNVKAVFERLVDIICDKMSESLDADPTLVGGGQKGQRLTDQPQGTPNANCNC.

GTP is bound by residues Ser30, Gly33, Lys34, Thr35, Ser36, Thr47, Ser48, Ser52, Thr53, Gly79, Asn134, Asp137, Ala165, and Lys166. Residue Thr35 coordinates Mg(2+). The Effector region motif lies at 50–58; that stretch reads FVSTVGIDF. Thr53 contributes to the Mg(2+) binding site. Positions 194-220 are disordered; sequence PTLVGGGQKGQRLTDQPQGTPNANCNC. Residues 204–220 show a composition bias toward polar residues; sequence QRLTDQPQGTPNANCNC. S-geranylgeranyl cysteine attachment occurs at residues Cys218 and Cys220. The residue at position 220 (Cys220) is a Cysteine methyl ester.

Belongs to the small GTPase superfamily. Rab family. As to quaternary structure, interacts with Rph.

It localises to the cytoplasmic vesicle. Its subcellular location is the secretory vesicle. The protein localises to the synaptic vesicle. In terms of biological role, involved in exocytosis by regulating a late step in synaptic vesicle fusion. Could play a role in neurotransmitter release by regulating membrane flow in the nerve terminal. This chain is Ras-related protein Rab-3 (Rab3), found in Drosophila melanogaster (Fruit fly).